We begin with the raw amino-acid sequence, 1360 residues long: S-layer protein A (1360 aa).

An N-terminal signal peptide occupies residues 1 to 24 (MNKSAIRYLSLLLVFLMGGSFLAG).

It belongs to the Sulfolobales SlaA family. As to quaternary structure, the mushroom-shaped unit cells of the Sulfolobales' S-layers may consist of three SlaB subunits and six SlaA subunits.

Its subcellular location is the secreted. It localises to the cell wall. It is found in the S-layer. In terms of biological role, S-layer large protein. May form the highly ordered outer sheath. The chain is S-layer protein A from Metallosphaera sedula (strain ATCC 51363 / DSM 5348 / JCM 9185 / NBRC 15509 / TH2).